The primary structure comprises 217 residues: Peptide methionine sulfoxide reductase MsrA (217 aa).

Cys-56 is an active-site residue.

Belongs to the MsrA Met sulfoxide reductase family.

The catalysed reaction is L-methionyl-[protein] + [thioredoxin]-disulfide + H2O = L-methionyl-(S)-S-oxide-[protein] + [thioredoxin]-dithiol. The enzyme catalyses [thioredoxin]-disulfide + L-methionine + H2O = L-methionine (S)-S-oxide + [thioredoxin]-dithiol. Has an important function as a repair enzyme for proteins that have been inactivated by oxidation. Catalyzes the reversible oxidation-reduction of methionine sulfoxide in proteins to methionine. The chain is Peptide methionine sulfoxide reductase MsrA from Corynebacterium glutamicum (strain R).